The primary structure comprises 859 residues: Homeobox-leucine zipper protein HOX32 (859 aa).

The disordered stretch occupies residues 7 to 31 (AAVHGVGRQDRSSPGGGGAPQVDTG). Positions 29–92 (DTGKYVRYTP…NRRCREKQRK (64 aa)) form a DNA-binding region, homeobox. A coiled-coil region spans residues 100 to 129 (VNRKLTAMNKLLMEENDRLQKQVSRLVYEN). The span at 146 to 164 (TSCESVVTSGQHHQQQNPA) shows a compositional bias: polar residues. The segment at 146–172 (TSCESVVTSGQHHQQQNPAATRPQRDA) is disordered. The 223-residue stretch at 171-393 (DANNPAGLLA…LRHIRQIAHE (223 aa)) folds into the START domain.

It belongs to the HD-ZIP homeobox family. Class III subfamily. In terms of tissue distribution, expressed in seedlings, roots, stems, leaf sheaths and blades and panicles.

It is found in the nucleus. Its function is as follows. Probable transcription factor. This chain is Homeobox-leucine zipper protein HOX32 (HOX32), found in Oryza sativa subsp. indica (Rice).